Reading from the N-terminus, the 97-residue chain is Protein Vpr (97 aa).

A homooligomerization region spans residues 1-42 (MEQAPEDQGPQREPYNEWTLELLEELKREAVRHFPRPWLHSL). Phosphoserine; by host occurs at positions 79, 95, and 97.

Belongs to the HIV-1 VPR protein family. In terms of assembly, homooligomer, may form homodimer. Interacts with p6-gag region of the Pr55 Gag precursor protein through a (Leu-X-X)4 motif near the C-terminus of the P6gag protein. Interacts with host UNG. May interact with host RAD23A/HHR23A. Interacts with host VPRBP/DCAF1, leading to hijack the CUL4A-RBX1-DDB1-DCAF1/VPRBP complex, mediating ubiquitination of host proteins such as TERT and ZGPAT and arrest of the cell cycle in G2 phase. Phosphorylated on several residues by host. These phosphorylations regulate VPR activity for the nuclear import of the HIV-1 pre-integration complex.

It is found in the virion. The protein resides in the host nucleus. Its subcellular location is the host extracellular space. Its function is as follows. During virus replication, may deplete host UNG protein, and incude G2-M cell cycle arrest. Acts by targeting specific host proteins for degradation by the 26S proteasome, through association with the cellular CUL4A-DDB1 E3 ligase complex by direct interaction with host VPRPB/DCAF-1. Cell cycle arrest reportedly occurs within hours of infection and is not blocked by antiviral agents, suggesting that it is initiated by the VPR carried into the virion. Additionally, VPR induces apoptosis in a cell cycle dependent manner suggesting that these two effects are mechanistically linked. Detected in the serum and cerebrospinal fluid of AIDS patient, VPR may also induce cell death to bystander cells. In terms of biological role, during virus entry, plays a role in the transport of the viral pre-integration (PIC) complex to the host nucleus. This function is crucial for viral infection of non-dividing macrophages. May act directly at the nuclear pore complex, by binding nucleoporins phenylalanine-glycine (FG)-repeat regions. In Human immunodeficiency virus type 1 group M subtype B (isolate ARV2/SF2) (HIV-1), this protein is Protein Vpr.